Here is a 164-residue protein sequence, read N- to C-terminus: Two-component response regulator ARR16 (164 aa).

The Response regulatory domain maps to 30-160 (HVLAVDDNLI…DVEKLKCHLM (131 aa)). Position 93 is a 4-aspartylphosphate (D93).

This sequence belongs to the ARR family. Type-A subfamily. Two-component system major event consists of a His-to-Asp phosphorelay between a sensor histidine kinase (HK) and a response regulator (RR). In plants, the His-to-Asp phosphorelay involves an additional intermediate named Histidine-containing phosphotransfer protein (HPt). This multistep phosphorelay consists of a His-Asp-His-Asp sequential transfer of a phosphate group between first a His and an Asp of the HK protein, followed by the transfer to a conserved His of the HPt protein and finally the transfer to an Asp in the receiver domain of the RR protein.

The protein resides in the nucleus. In terms of biological role, functions as a response regulator involved in His-to-Asp phosphorelay signal transduction system. Phosphorylation of the Asp residue in the receiver domain activates the ability of the protein to promote the transcription of target genes. Type-A response regulators seem to act as negative regulators of the cytokinin signaling. This is Two-component response regulator ARR16 (ARR16) from Arabidopsis thaliana (Mouse-ear cress).